The following is a 375-amino-acid chain: DNA replication and repair protein RecF (375 aa).

30–37 provides a ligand contact to ATP; sequence GDNAQGKT.

Belongs to the RecF family.

The protein resides in the cytoplasm. Functionally, the RecF protein is involved in DNA metabolism; it is required for DNA replication and normal SOS inducibility. RecF binds preferentially to single-stranded, linear DNA. It also seems to bind ATP. This Symbiobacterium thermophilum (strain DSM 24528 / JCM 14929 / IAM 14863 / T) protein is DNA replication and repair protein RecF.